We begin with the raw amino-acid sequence, 323 residues long: Thymidylate synthase (323 aa).

DUMP-binding positions include arginine 21 and 172–173; that span reads RR. Residue cysteine 192 is the Nucleophile of the active site. DUMP is bound by residues 214–217, asparagine 225, and 255–257; these read RSND and HVY. Aspartate 217 provides a ligand contact to (6R)-5,10-methylene-5,6,7,8-tetrahydrofolate. Alanine 322 lines the (6R)-5,10-methylene-5,6,7,8-tetrahydrofolate pocket.

It belongs to the thymidylate synthase family. Bacterial-type ThyA subfamily. In terms of assembly, homodimer.

It is found in the cytoplasm. The enzyme catalyses dUMP + (6R)-5,10-methylene-5,6,7,8-tetrahydrofolate = 7,8-dihydrofolate + dTMP. The protein operates within pyrimidine metabolism; dTTP biosynthesis. Catalyzes the reductive methylation of 2'-deoxyuridine-5'-monophosphate (dUMP) to 2'-deoxythymidine-5'-monophosphate (dTMP) while utilizing 5,10-methylenetetrahydrofolate (mTHF) as the methyl donor and reductant in the reaction, yielding dihydrofolate (DHF) as a by-product. This enzymatic reaction provides an intracellular de novo source of dTMP, an essential precursor for DNA biosynthesis. This Bordetella parapertussis (strain 12822 / ATCC BAA-587 / NCTC 13253) protein is Thymidylate synthase.